A 216-amino-acid polypeptide reads, in one-letter code: MTKILPVSTISIFRIILILPQINMELLPTKAWLVLDDVKEINEPTKPVQFPLDQASLDCIAKMMAYVDASYNGDAEKYGIIPGIGIAANQIGYWKQMFYIHLMDGGVEHKCLLINPKIINLSANKSFLKSGEGCLSVPKMHQGYVIRHEWITITGFDWLQQKEITITATGLFGMCLQHEFDHLQGRFYYHRINPLNPLFTNKEWKVINPALPSDSE.

Fe cation contacts are provided by Cys-134 and His-178. Glu-179 is a catalytic residue. His-182 provides a ligand contact to Fe cation.

This sequence belongs to the polypeptide deformylase family. Fe(2+) is required as a cofactor.

It catalyses the reaction N-terminal N-formyl-L-methionyl-[peptide] + H2O = N-terminal L-methionyl-[peptide] + formate. Functionally, removes the formyl group from the N-terminal Met of newly synthesized proteins. Requires at least a dipeptide for an efficient rate of reaction. N-terminal L-methionine is a prerequisite for activity but the enzyme has broad specificity at other positions. In Mycoplasma pneumoniae (strain ATCC 29342 / M129 / Subtype 1) (Mycoplasmoides pneumoniae), this protein is Peptide deformylase.